The following is a 746-amino-acid chain: WD repeat-containing protein 91 (746 aa).

Residues 183-215 (QRTNQVQEENEVLRQKLFALQAEIHRLKKEEQQ) are a coiled coil. S256 bears the Phosphoserine mark. The span at 265–278 (LLPQSKKSPSRLSP) shows a compositional bias: low complexity. Positions 265 to 336 (LLPQSKKSPS…QHRQRRLQDH (72 aa)) are disordered. The span at 282–299 (PPQTQSSAKKESFGSQTT) shows a compositional bias: polar residues. S288 and S293 each carry phosphoserine. WD repeat units lie at residues 405–444 (EHHS…QTKA), 447–487 (ISKS…NLCE), 514–554 (AASS…QQLQ), 559–598 (PEPI…CAMS), 601–640 (AHCG…LKVS), 663–701 (VQVP…KVLE), and 708–746 (GHRA…AHKV).

It belongs to the WD repeat WDR91 family. As to quaternary structure, interacts with WDR81; involved in early to late endosome cargo transport. Interacts with BECN1; negatively regulates the PI3 kinase/PI3K activity associated with endosomal membranes.

The protein localises to the early endosome membrane. The protein resides in the late endosome membrane. Its function is as follows. Functions as a negative regulator of the PI3 kinase/PI3K activity associated with endosomal membranes via BECN1, a core subunit of the PI3K complex. By modifying the phosphatidylinositol 3-phosphate/PtdInsP3 content of endosomal membranes may regulate endosome fusion, recycling, sorting and early to late endosome transport. It is for instance, required for the delivery of cargos like BST2/tetherin from early to late endosome and thereby participates indirectly to their degradation by the lysosome. May play a role in meiosis. In Bos taurus (Bovine), this protein is WD repeat-containing protein 91.